A 254-amino-acid polypeptide reads, in one-letter code: 2-dehydro-3-deoxy-D-gluconate 5-dehydrogenase (254 aa).

The active-site Proton acceptor is the Y159.

It belongs to the short-chain dehydrogenases/reductases (SDR) family.

It carries out the reaction 2-dehydro-3-deoxy-D-gluconate + NAD(+) = 3-deoxy-D-glycero-2,5-hexodiulosonate + NADH + H(+). In terms of biological role, involved in the degradation of 3,6-anhydro-L-galactose, which is the major monomeric sugar of red macroalgae. Catalyzes the fourth step of the pathway, the reduction of 3-deoxy-D-glycero-2,5-hexodiulosonate (L-DDGal) to 2-dehydro-3-deoxy-D-gluconate (KDG). The protein is 2-dehydro-3-deoxy-D-gluconate 5-dehydrogenase of Pseudoalteromonas atlantica (strain T6c / ATCC BAA-1087).